Consider the following 610-residue polypeptide: Elongation factor 4 (610 aa).

One can recognise a tr-type G domain in the interval Glu-11–Ser-193. GTP contacts are provided by residues Asp-23 to Thr-28 and Asn-140 to Asp-143.

The protein belongs to the TRAFAC class translation factor GTPase superfamily. Classic translation factor GTPase family. LepA subfamily.

The protein localises to the cell membrane. The enzyme catalyses GTP + H2O = GDP + phosphate + H(+). In terms of biological role, required for accurate and efficient protein synthesis under certain stress conditions. May act as a fidelity factor of the translation reaction, by catalyzing a one-codon backward translocation of tRNAs on improperly translocated ribosomes. Back-translocation proceeds from a post-translocation (POST) complex to a pre-translocation (PRE) complex, thus giving elongation factor G a second chance to translocate the tRNAs correctly. Binds to ribosomes in a GTP-dependent manner. The chain is Elongation factor 4 from Streptococcus uberis (strain ATCC BAA-854 / 0140J).